The following is an 80-amino-acid chain: Acyl carrier protein (80 aa).

The 76-residue stretch at 4 to 79 (EAILEKVRSI…DAVKYIEEKQ (76 aa)) folds into the Carrier domain. Residue serine 39 is modified to O-(pantetheine 4'-phosphoryl)serine.

This sequence belongs to the acyl carrier protein (ACP) family. 4'-phosphopantetheine is transferred from CoA to a specific serine of apo-ACP by AcpS. This modification is essential for activity because fatty acids are bound in thioester linkage to the sulfhydryl of the prosthetic group.

It localises to the cytoplasm. It functions in the pathway lipid metabolism; fatty acid biosynthesis. Its function is as follows. Carrier of the growing fatty acid chain in fatty acid biosynthesis. The chain is Acyl carrier protein from Prochlorococcus marinus (strain NATL1A).